The chain runs to 94 residues: Large ribosomal subunit protein eL37 (94 aa).

Residues Cys-19, Cys-22, Cys-34, and Cys-37 each coordinate Zn(2+). The segment at 19-37 adopts a C4-type zinc-finger fold; sequence CRRCGKATYHKQKLRCAAC.

It belongs to the eukaryotic ribosomal protein eL37 family. It depends on Zn(2+) as a cofactor.

Its subcellular location is the cytoplasm. Functionally, binds to the 23S rRNA. This is Large ribosomal subunit protein eL37 (RPL37) from Tetrahymena thermophila (strain SB210).